Here is a 118-residue protein sequence, read N- to C-terminus: Small ribosomal subunit protein uS13 (118 aa).

The disordered stretch occupies residues 99 to 118 (GQRTRTNARTRKGPRKAIKK).

Belongs to the universal ribosomal protein uS13 family. In terms of assembly, part of the 30S ribosomal subunit. Forms a loose heterodimer with protein S19. Forms two bridges to the 50S subunit in the 70S ribosome.

Its function is as follows. Located at the top of the head of the 30S subunit, it contacts several helices of the 16S rRNA. In the 70S ribosome it contacts the 23S rRNA (bridge B1a) and protein L5 of the 50S subunit (bridge B1b), connecting the 2 subunits; these bridges are implicated in subunit movement. Contacts the tRNAs in the A and P-sites. This chain is Small ribosomal subunit protein uS13, found in Xylella fastidiosa (strain M23).